Consider the following 334-residue polypeptide: Ferrochelatase 1 (334 aa).

Fe cation contacts are provided by histidine 201 and glutamate 282.

Belongs to the ferrochelatase family.

The protein resides in the cytoplasm. It catalyses the reaction heme b + 2 H(+) = protoporphyrin IX + Fe(2+). It functions in the pathway porphyrin-containing compound metabolism; protoheme biosynthesis; protoheme from protoporphyrin-IX: step 1/1. In terms of biological role, catalyzes the ferrous insertion into protoporphyrin IX. The protein is Ferrochelatase 1 of Shewanella oneidensis (strain ATCC 700550 / JCM 31522 / CIP 106686 / LMG 19005 / NCIMB 14063 / MR-1).